The following is a 55-amino-acid chain: Large ribosomal subunit protein bL33 (55 aa).

Belongs to the bacterial ribosomal protein bL33 family.

In Rhodospirillum centenum (strain ATCC 51521 / SW), this protein is Large ribosomal subunit protein bL33.